A 646-amino-acid chain; its full sequence is Interferon-induced GTP-binding protein MxA (646 aa).

A Dynamin-type G domain is found at 34 to 307; sequence DLALPAIAVI…LVHHIQKSLP (274 aa). The interval 44–51 is G1 motif; that stretch reads GDQSSGKS. 44 to 51 contributes to the GTP binding site; sequence GDQSSGKS. The G2 motif stretch occupies residues 69 to 71; the sequence is VTR. The G3 motif stretch occupies residues 145 to 148; sequence DLPG. Residues 145 to 149 and 214 to 217 each bind GTP; these read DLPGI and TKPD. Residues 214-217 form a G4 motif region; it reads TKPD. Residues 246 to 249 are G5 motif; that stretch reads RCRG. The region spanning 546–637 is the GED domain; it reads LREMRLHLKS…PLGHLLEVTF (92 aa).

It belongs to the TRAFAC class dynamin-like GTPase superfamily. Dynamin/Fzo/YdjA family.

It is found in the cytoplasm. The polypeptide is Interferon-induced GTP-binding protein MxA (mxa) (Danio rerio (Zebrafish)).